We begin with the raw amino-acid sequence, 299 residues long: Oxygen-dependent coproporphyrinogen-III oxidase (299 aa).

Ser-92 contacts substrate. Positions 96 and 106 each coordinate a divalent metal cation. The active-site Proton donor is His-106. Residue 108–110 participates in substrate binding; sequence NVR. A divalent metal cation is bound by residues His-145 and His-175. Residues 239-274 are important for dimerization; the sequence is YVEFNLVYDRGTLFGLQSGGRAESILMSLPPRVRWE. Substrate is bound at residue 257–259; it reads GGR.

This sequence belongs to the aerobic coproporphyrinogen-III oxidase family. In terms of assembly, homodimer. It depends on a divalent metal cation as a cofactor.

It is found in the cytoplasm. The enzyme catalyses coproporphyrinogen III + O2 + 2 H(+) = protoporphyrinogen IX + 2 CO2 + 2 H2O. It participates in porphyrin-containing compound metabolism; protoporphyrin-IX biosynthesis; protoporphyrinogen-IX from coproporphyrinogen-III (O2 route): step 1/1. In terms of biological role, involved in the heme biosynthesis. Catalyzes the aerobic oxidative decarboxylation of propionate groups of rings A and B of coproporphyrinogen-III to yield the vinyl groups in protoporphyrinogen-IX. The chain is Oxygen-dependent coproporphyrinogen-III oxidase from Xanthomonas euvesicatoria pv. vesicatoria (strain 85-10) (Xanthomonas campestris pv. vesicatoria).